Reading from the N-terminus, the 293-residue chain is GTPase Era (293 aa).

An Era-type G domain is found at 2-168; the sequence is KILFSTIIGR…INEIKKYSYE (167 aa). The G1 stretch occupies residues 10-17; that stretch reads GRPNVGKS. A GTP-binding site is contributed by 10 to 17; the sequence is GRPNVGKS. A G2 region spans residues 36-40; the sequence is QATRD. A G3 region spans residues 57 to 60; sequence DTPG. GTP contacts are provided by residues 57–61 and 118–121; these read DTPGI and TKID. Residues 118–121 are G4; it reads TKID. The interval 147 to 149 is G5; it reads ISS. Positions 199–279 constitute a KH type-2 domain; it reads LEQELPHSIL…KLFLKIKVKK (81 aa).

It belongs to the TRAFAC class TrmE-Era-EngA-EngB-Septin-like GTPase superfamily. Era GTPase family. As to quaternary structure, monomer.

It is found in the cytoplasm. Its subcellular location is the cell membrane. In terms of biological role, an essential GTPase that binds both GDP and GTP, with rapid nucleotide exchange. Plays a role in 16S rRNA processing and 30S ribosomal subunit biogenesis and possibly also in cell cycle regulation and energy metabolism. This chain is GTPase Era, found in Mycoplasmopsis pulmonis (strain UAB CTIP) (Mycoplasma pulmonis).